The primary structure comprises 125 residues: C-X-C motif chemokine 9 (125 aa).

The signal sequence occupies residues 1 to 21 (MKKSAPLFLGIIFLTLTGVQG). Cystine bridges form between cysteine 30/cysteine 57 and cysteine 32/cysteine 73. The segment at 91-125 (QVNQKKKQRKGKKYKKTKKVPKVKRSQRPSQKKTT) is disordered. Residues 93–125 (NQKKKQRKGKKYKKTKKVPKVKRSQRPSQKKTT) are compositionally biased toward basic residues.

It belongs to the intercrine alpha (chemokine CxC) family.

The protein resides in the secreted. Functionally, cytokine that affects the growth, movement, or activation state of cells that participate in immune and inflammatory response. Chemotactic for activated T-cells. Binds to CXCR3. The protein is C-X-C motif chemokine 9 (CXCL9) of Bos taurus (Bovine).